A 310-amino-acid polypeptide reads, in one-letter code: Carbamate kinase-like protein YqeA (310 aa).

The protein belongs to the carbamate kinase family.

The polypeptide is Carbamate kinase-like protein YqeA (yqeA) (Escherichia coli (strain K12)).